A 549-amino-acid chain; its full sequence is Cytoplasmic trehalase (549 aa).

Substrate is bound by residues arginine 168, 175–176 (WD), asparagine 212, 221–223 (RSQ), 292–294 (RDE), and glycine 324. Active-site proton donor/acceptor residues include aspartate 326 and glutamate 509. Glutamate 525 contacts substrate.

The protein belongs to the glycosyl hydrolase 37 family. Monomer.

The protein localises to the cytoplasm. The enzyme catalyses alpha,alpha-trehalose + H2O = alpha-D-glucose + beta-D-glucose. The protein operates within glycan degradation; trehalose degradation; D-glucose from alpha,alpha-trehalose: step 1/1. Functionally, hydrolyzes trehalose to glucose. Could be involved, in cells returning to low osmolarity conditions, in the utilization of the accumulated cytoplasmic trehalose, which was synthesized in response to high osmolarity. This is Cytoplasmic trehalase from Escherichia coli O139:H28 (strain E24377A / ETEC).